The primary structure comprises 269 residues: Imidazole glycerol phosphate synthase subunit HisF (269 aa).

Residues D23 and D142 contribute to the active site.

This sequence belongs to the HisA/HisF family. As to quaternary structure, heterodimer of HisH and HisF.

It is found in the cytoplasm. It carries out the reaction 5-[(5-phospho-1-deoxy-D-ribulos-1-ylimino)methylamino]-1-(5-phospho-beta-D-ribosyl)imidazole-4-carboxamide + L-glutamine = D-erythro-1-(imidazol-4-yl)glycerol 3-phosphate + 5-amino-1-(5-phospho-beta-D-ribosyl)imidazole-4-carboxamide + L-glutamate + H(+). It functions in the pathway amino-acid biosynthesis; L-histidine biosynthesis; L-histidine from 5-phospho-alpha-D-ribose 1-diphosphate: step 5/9. IGPS catalyzes the conversion of PRFAR and glutamine to IGP, AICAR and glutamate. The HisF subunit catalyzes the cyclization activity that produces IGP and AICAR from PRFAR using the ammonia provided by the HisH subunit. The protein is Imidazole glycerol phosphate synthase subunit HisF of Bordetella pertussis (strain Tohama I / ATCC BAA-589 / NCTC 13251).